The chain runs to 248 residues: Transcription factor MYB1 (248 aa).

2 consecutive HTH myb-type domains span residues 9-61 (KEGM…LNYL) and 62-116 (RPGI…GRRV). 2 consecutive DNA-binding regions (H-T-H motif) follow at residues 37–61 (WRSL…LNYL) and 89–112 (WSLI…NTNL). The segment at 118 to 144 (DQSHQHCRPNPTITSTKPADAPPANAN) is disordered.

It is found in the nucleus. Its function is as follows. Transcription activator involved in the spatiotemporal regulation of flavonoid biosynthesis specifically in the corms of Montbretia. Activates the promoters of enzymes involved in the biosynthesis of the flavonol kaempferol and the flavonol-glycoside kaempferol-rhamnoside. The polypeptide is Transcription factor MYB1 (Crocosmia x crocosmiiflora (Montbretia)).